The chain runs to 358 residues: 2-oxoisovalerate dehydrogenase subunit beta 2, mitochondrial (358 aa).

The transit peptide at methionine 1–proline 16 directs the protein to the mitochondrion. Tyrosine 119 provides a ligand contact to thiamine diphosphate. Glycine 145, leucine 147, threonine 148, aspartate 198, and asparagine 200 together coordinate K(+).

Heterotetramer of alpha and beta chains. The cofactor is thiamine diphosphate. Expressed in the non-photosynthetic organs such as siliques, flowers and roots.

The protein localises to the mitochondrion matrix. It catalyses the reaction N(6)-[(R)-lipoyl]-L-lysyl-[protein] + 3-methyl-2-oxobutanoate + H(+) = N(6)-[(R)-S(8)-2-methylpropanoyldihydrolipoyl]-L-lysyl-[protein] + CO2. In terms of biological role, the branched-chain alpha-keto dehydrogenase complex catalyzes the overall conversion of alpha-keto acids to acyl-CoA and CO(2). It contains multiple copies of three enzymatic components: branched-chain alpha-keto acid decarboxylase (E1), lipoamide acyltransferase (E2) and lipoamide dehydrogenase (E3). Required during sugar starvation and acts under the control of a sugar-sensing mechanism involving Ser/Thr kinases and phosphatases. In Arabidopsis thaliana (Mouse-ear cress), this protein is 2-oxoisovalerate dehydrogenase subunit beta 2, mitochondrial (DIN4).